Here is a 157-residue protein sequence, read N- to C-terminus: 2-C-methyl-D-erythritol 2,4-cyclodiphosphate synthase (157 aa).

Residues Asp8 and His10 each contribute to the a divalent metal cation site. Residues 8–10 and 34–35 contribute to the 4-CDP-2-C-methyl-D-erythritol 2-phosphate site; these read DVH and HS. His42 provides a ligand contact to a divalent metal cation. 4-CDP-2-C-methyl-D-erythritol 2-phosphate-binding positions include 56 to 58, 61 to 65, 132 to 135, Phe139, and Arg142; these read DIG, FPDNE, and TTTE.

Belongs to the IspF family. As to quaternary structure, homotrimer. Requires a divalent metal cation as cofactor.

It catalyses the reaction 4-CDP-2-C-methyl-D-erythritol 2-phosphate = 2-C-methyl-D-erythritol 2,4-cyclic diphosphate + CMP. It participates in isoprenoid biosynthesis; isopentenyl diphosphate biosynthesis via DXP pathway; isopentenyl diphosphate from 1-deoxy-D-xylulose 5-phosphate: step 4/6. Its function is as follows. Involved in the biosynthesis of isopentenyl diphosphate (IPP) and dimethylallyl diphosphate (DMAPP), two major building blocks of isoprenoid compounds. Catalyzes the conversion of 4-diphosphocytidyl-2-C-methyl-D-erythritol 2-phosphate (CDP-ME2P) to 2-C-methyl-D-erythritol 2,4-cyclodiphosphate (ME-CPP) with a corresponding release of cytidine 5-monophosphate (CMP). This chain is 2-C-methyl-D-erythritol 2,4-cyclodiphosphate synthase, found in Desulforamulus reducens (strain ATCC BAA-1160 / DSM 100696 / MI-1) (Desulfotomaculum reducens).